The sequence spans 37 residues: Large ribosomal subunit protein bL36 (37 aa).

It belongs to the bacterial ribosomal protein bL36 family.

This is Large ribosomal subunit protein bL36 from Alkaliphilus metalliredigens (strain QYMF).